Consider the following 563-residue polypeptide: MRKFNKPLLALLIGSTLCSAAQAAAPGKPTIAWGNTKFAIVEVDQAATAYNNLVKVKNAADVSVSWNLWNGDAGTTAKILLNGKEAWSGPSTGSSGTANFKVNKGGRYQMQVALCNADGCTASDATEIVVADTDGSHLAPLKEPLLEKNKPYKQNSGKVVGSYFVEWGVYGRNFTVDKIPAQNLTHLLYGFIPICGGNGINDSLKEIEGSFQALQRSCQGREDFKVSIHDPFAALQKAQKGVTAWDDPYKGNFGQLMALKQAHPDLKILPSIGGWTLSDPFFFMGDKVKRDRFVGSVKEFLQTWKFFDGVDIDWEFPGGKGANPNLGSPQDGETYVLLMKELRAMLDQLSAETGRKYELTSAISAGKDKIDKVAYNVAQNSMDHIFLMSYDFYGPFDLKNLGHQTALNAPAWKPDTAYTTVNGVNALLAQGVKPGKVVVGTAMYGRGWTGVNGYQNNIPFTGTATGPVKGTWKNGIVDYRQIAGQFMSGEWQYTYDATAEAPYVFKPSTGDLITFDDARSVQAKGKYVLDKQLGGLFSWEIDADNGDILNSMNASLGNSAGVQ.

Residues Met1–Ala23 form the signal peptide. The GH18 domain maps to Lys158–Ser559. Catalysis depends on Glu315, which acts as the Proton donor.

The protein belongs to the glycosyl hydrolase 18 family. Chitinase class II subfamily.

It carries out the reaction Random endo-hydrolysis of N-acetyl-beta-D-glucosaminide (1-&gt;4)-beta-linkages in chitin and chitodextrins.. This is Chitinase A (chiA) from Serratia marcescens.